We begin with the raw amino-acid sequence, 645 residues long: DNA ligase (645 aa).

Residues 30-34 (DAEFD) and 72-73 (SQ) each bind NAD(+). Lysine 99 serves as the catalytic N6-AMP-lysine intermediate. Residues arginine 120, glutamate 163, lysine 275, and lysine 296 each contribute to the NAD(+) site. Cysteine 387, cysteine 390, cysteine 403, and cysteine 408 together coordinate Zn(2+). Positions 564 to 645 (EEGAVLKGLS…EAFLNLIGKV (82 aa)) constitute a BRCT domain.

The protein belongs to the NAD-dependent DNA ligase family. LigA subfamily. Mg(2+) is required as a cofactor. The cofactor is Mn(2+).

The catalysed reaction is NAD(+) + (deoxyribonucleotide)n-3'-hydroxyl + 5'-phospho-(deoxyribonucleotide)m = (deoxyribonucleotide)n+m + AMP + beta-nicotinamide D-nucleotide.. Its function is as follows. DNA ligase that catalyzes the formation of phosphodiester linkages between 5'-phosphoryl and 3'-hydroxyl groups in double-stranded DNA using NAD as a coenzyme and as the energy source for the reaction. It is essential for DNA replication and repair of damaged DNA. The chain is DNA ligase from Treponema denticola (strain ATCC 35405 / DSM 14222 / CIP 103919 / JCM 8153 / KCTC 15104).